The following is a 226-amino-acid chain: Ras-related protein Rab-32 (226 aa).

N-acetylalanine is present on Ala-2. GTP-binding residues include Val-38, Gly-39, Lys-40, Thr-41, Ser-42, Ser-53, Gln-54, Tyr-56, and Thr-59. Thr-41 provides a ligand contact to Mg(2+). A Switch 1 motif is present at residues 50 to 64; sequence QLFSQHYRATIGVDF. Thr-59 contributes to the Mg(2+) binding site. Residue Ser-73 is modified to Phosphoserine. Asp-83 contacts Mg(2+). 6 residues coordinate GTP: Gly-86, Asn-145, Lys-146, Asp-148, Ala-177, and Lys-178. The Switch 2 motif lies at 86–99; sequence GQERFGNMTRVYYK. The PKA-RII subunit binding domain stretch occupies residues 180 to 199; sequence NINIDEAARFLVENILANHQ. The tract at residues 202–226 is disordered; the sequence is PSEENDGRIKLDEETMKKENKSHCC. Over residues 206–226 the composition is skewed to basic and acidic residues; the sequence is NDGRIKLDEETMKKENKSHCC. Residues Cys-225 and Cys-226 are each lipidated (S-geranylgeranyl cysteine).

The protein belongs to the small GTPase superfamily. Rab family. In terms of assembly, interacts with ANKRD27. A decreased interaction with ANKRD27 seen in the presence of SGSM2. Interacts with LRRK2 (via N-terminus); this interaction results in stimulation of RAB10 phosphorylation by LRRK2. It depends on Mg(2+) as a cofactor.

The protein localises to the mitochondrion. It localises to the mitochondrion outer membrane. The protein resides in the cytoplasmic vesicle. It is found in the phagosome. Its subcellular location is the phagosome membrane. The protein localises to the melanosome. It localises to the melanosome membrane. The enzyme catalyses GTP + H2O = GDP + phosphate + H(+). With respect to regulation, regulated by guanine the nucleotide exchange factor (GEF) BLOC-3 complex composed of HPS1 and HPS4 which promote the exchange of bound GDP for free GTP. Regulated by the GTPase activating protein (GAP) SGSM2/RUTBC1 which increases the GTP hydrolysis activity. Inhibited by GDP dissociation inhibitors (GDIs) which prevent Rab-GDP dissociation. Its function is as follows. The small GTPases Rab are key regulators of intracellular membrane trafficking, from the formation of transport vesicles to their fusion with membranes. Rabs cycle between an inactive GDP-bound form and an active GTP-bound form that is able to recruit to membranes different set of downstream effectors directly responsible for vesicle formation, movement, tethering and fusion. Also acts as an A-kinase anchoring protein by binding to the type II regulatory subunit of protein kinase A and anchoring it to the mitochondrion. Also involved in synchronization of mitochondrial fission. Plays a role in the maturation of phagosomes that engulf pathogens, such as S.aureus and M.tuberculosis. Plays an important role in the control of melanin production and melanosome biogenesis. In concert with RAB38, regulates the proper trafficking of melanogenic enzymes TYR, TYRP1 and DCT/TYRP2 to melanosomes in melanocytes. Stimulates phosphorylation of RAB10 'Thr-73' by LRRK2. In Sus scrofa (Pig), this protein is Ras-related protein Rab-32 (RAB32).